Here is a 72-residue protein sequence, read N- to C-terminus: MSFFKLYEIKKKYVNNNYNNNNNNNNNNNNNNNNNNNNNNNNNNININNNNNNNNNNNNNNNNIEIIILLLL.

The segment at 15-62 is disordered; that stretch reads NNNYNNNNNNNNNNNNNNNNNNNNNNNNNNININNNNNNNNNNNNNNN.

This is an uncharacterized protein from Dictyostelium discoideum (Social amoeba).